The primary structure comprises 310 residues: Cysteine synthase (310 aa).

N6-(pyridoxal phosphate)lysine is present on lysine 44. Residues asparagine 74, 179-183 (GTGGT), and serine 267 contribute to the pyridoxal 5'-phosphate site.

Belongs to the cysteine synthase/cystathionine beta-synthase family. Pyridoxal 5'-phosphate is required as a cofactor.

The catalysed reaction is O-acetyl-L-serine + hydrogen sulfide = L-cysteine + acetate. The protein operates within amino-acid biosynthesis; L-cysteine biosynthesis; L-cysteine from L-serine: step 2/2. The chain is Cysteine synthase (cysK) from Neisseria meningitidis serogroup B (strain ATCC BAA-335 / MC58).